Reading from the N-terminus, the 192-residue chain is Peptidyl-tRNA hydrolase (192 aa).

Tyrosine 17 provides a ligand contact to tRNA. Residue histidine 22 is the Proton acceptor of the active site. TRNA contacts are provided by tyrosine 68, asparagine 70, and asparagine 116.

Belongs to the PTH family. Monomer.

It is found in the cytoplasm. It catalyses the reaction an N-acyl-L-alpha-aminoacyl-tRNA + H2O = an N-acyl-L-amino acid + a tRNA + H(+). Its function is as follows. Hydrolyzes ribosome-free peptidyl-tRNAs (with 1 or more amino acids incorporated), which drop off the ribosome during protein synthesis, or as a result of ribosome stalling. Functionally, catalyzes the release of premature peptidyl moieties from peptidyl-tRNA molecules trapped in stalled 50S ribosomal subunits, and thus maintains levels of free tRNAs and 50S ribosomes. This Mycolicibacterium gilvum (strain PYR-GCK) (Mycobacterium gilvum (strain PYR-GCK)) protein is Peptidyl-tRNA hydrolase.